Reading from the N-terminus, the 124-residue chain is Small ribosomal subunit protein uS12 (124 aa).

Asp-89 is modified (3-methylthioaspartic acid).

Belongs to the universal ribosomal protein uS12 family. In terms of assembly, part of the 30S ribosomal subunit. Contacts proteins S8 and S17. May interact with IF1 in the 30S initiation complex.

Its function is as follows. With S4 and S5 plays an important role in translational accuracy. In terms of biological role, interacts with and stabilizes bases of the 16S rRNA that are involved in tRNA selection in the A site and with the mRNA backbone. Located at the interface of the 30S and 50S subunits, it traverses the body of the 30S subunit contacting proteins on the other side and probably holding the rRNA structure together. The combined cluster of proteins S8, S12 and S17 appears to hold together the shoulder and platform of the 30S subunit. The chain is Small ribosomal subunit protein uS12 from Nitratiruptor sp. (strain SB155-2).